The primary structure comprises 413 residues: SWIRM domain-containing protein FUN19 (413 aa).

Over residues 35 to 51 (KASNNNNDSNKNGLNMS) the composition is skewed to low complexity. Disordered regions lie at residues 35 to 55 (KASN…DYSN), 189 to 211 (YNDD…PLAS), and 249 to 271 (YSPQ…PSAS). A Phosphothreonine modification is found at T194. Low complexity predominate over residues 200–211 (SSSSRLPSPLAS). A phosphoserine mark is found at S207 and S211. Residues 316–413 (LKIEWKGSPM…LQDSNFTKYL (98 aa)) enclose the SWIRM domain.

The sequence is that of SWIRM domain-containing protein FUN19 (FUN19) from Saccharomyces cerevisiae (strain ATCC 204508 / S288c) (Baker's yeast).